Here is an 89-residue protein sequence, read N- to C-terminus: Sugar transporter SemiSWEET (89 aa).

3 helical membrane-spanning segments follow: residues 4–27 (ILLT…IKTI), 35–55 (ISVV…AYGI), and 60–82 (FAVL…ITLI). The 53-residue stretch at 7 to 59 (TGLFAAFFTTFAFAPQSIKTIRTRNTEGISVVMYIMFLTGVISWIAYGIMRSD) folds into the PQ-loop domain.

Homodimer.

Its subcellular location is the cell membrane. Functionally, the homodimer mediates transmembrane sugar transport down a concentration gradient. Transport is probably effected by rocking-type movements, where a cargo-binding cavity opens first on one and then on the other side of the membrane. This is Sugar transporter SemiSWEET from Escherichia coli (strain UMEA 3162-1).